A 376-amino-acid polypeptide reads, in one-letter code: Chaperone protein DnaJ (376 aa).

One can recognise a J domain in the interval 5 to 69; it reads DYYEVLGISK…QKRAQYDQYG (65 aa). Residues 133 to 215 form a CR-type zinc finger; sequence GKDAEIEIPR…CHGKGRVTKT (83 aa). 8 residues coordinate Zn(2+): C146, C149, C163, C166, C189, C192, C203, and C206. CXXCXGXG motif repeat units follow at residues 146–153, 163–170, 189–196, and 203–210; these read CDTCHGSG, CSHCGGKG, CQYCNGTG, and CPTCHGKG.

This sequence belongs to the DnaJ family. As to quaternary structure, homodimer. Zn(2+) is required as a cofactor.

Its subcellular location is the cytoplasm. In terms of biological role, participates actively in the response to hyperosmotic and heat shock by preventing the aggregation of stress-denatured proteins and by disaggregating proteins, also in an autonomous, DnaK-independent fashion. Unfolded proteins bind initially to DnaJ; upon interaction with the DnaJ-bound protein, DnaK hydrolyzes its bound ATP, resulting in the formation of a stable complex. GrpE releases ADP from DnaK; ATP binding to DnaK triggers the release of the substrate protein, thus completing the reaction cycle. Several rounds of ATP-dependent interactions between DnaJ, DnaK and GrpE are required for fully efficient folding. Also involved, together with DnaK and GrpE, in the DNA replication of plasmids through activation of initiation proteins. The sequence is that of Chaperone protein DnaJ from Listeria monocytogenes serotype 4a (strain HCC23).